The primary structure comprises 236 residues: Purine nucleoside phosphorylase DeoD-type (236 aa).

Residue His-5 participates in a purine D-ribonucleoside binding. Phosphate is bound by residues Gly-21, Arg-25, Arg-44, and 88–91 (RVGT). Residues 180 to 182 (EME) and 204 to 205 (SD) contribute to the a purine D-ribonucleoside site. The active-site Proton donor is the Asp-205.

This sequence belongs to the PNP/UDP phosphorylase family. In terms of assembly, homohexamer; trimer of homodimers.

It carries out the reaction a purine D-ribonucleoside + phosphate = a purine nucleobase + alpha-D-ribose 1-phosphate. The enzyme catalyses a purine 2'-deoxy-D-ribonucleoside + phosphate = a purine nucleobase + 2-deoxy-alpha-D-ribose 1-phosphate. Functionally, catalyzes the reversible phosphorolytic breakdown of the N-glycosidic bond in the beta-(deoxy)ribonucleoside molecules, with the formation of the corresponding free purine bases and pentose-1-phosphate. This Shewanella baltica (strain OS223) protein is Purine nucleoside phosphorylase DeoD-type.